The sequence spans 359 residues: 3-dehydroquinate synthase (359 aa).

NAD(+) is bound by residues D70–K75, G105–D109, T129–T130, K142, K151, and F169–T172. Zn(2+) contacts are provided by E184, H247, and H264.

Belongs to the sugar phosphate cyclases superfamily. Dehydroquinate synthase family. Co(2+) is required as a cofactor. It depends on Zn(2+) as a cofactor. The cofactor is NAD(+).

Its subcellular location is the cytoplasm. The enzyme catalyses 7-phospho-2-dehydro-3-deoxy-D-arabino-heptonate = 3-dehydroquinate + phosphate. It participates in metabolic intermediate biosynthesis; chorismate biosynthesis; chorismate from D-erythrose 4-phosphate and phosphoenolpyruvate: step 2/7. In terms of biological role, catalyzes the conversion of 3-deoxy-D-arabino-heptulosonate 7-phosphate (DAHP) to dehydroquinate (DHQ). This chain is 3-dehydroquinate synthase, found in Francisella tularensis subsp. holarctica (strain FTNF002-00 / FTA).